The chain runs to 277 residues: Phosphoenolpyruvate synthase regulatory protein (277 aa).

157-164 contacts ADP; sequence GVSRCGKT.

It belongs to the pyruvate, phosphate/water dikinase regulatory protein family. PSRP subfamily.

It catalyses the reaction [pyruvate, water dikinase] + ADP = [pyruvate, water dikinase]-phosphate + AMP + H(+). The catalysed reaction is [pyruvate, water dikinase]-phosphate + phosphate + H(+) = [pyruvate, water dikinase] + diphosphate. Bifunctional serine/threonine kinase and phosphorylase involved in the regulation of the phosphoenolpyruvate synthase (PEPS) by catalyzing its phosphorylation/dephosphorylation. The polypeptide is Phosphoenolpyruvate synthase regulatory protein (Shigella boydii serotype 4 (strain Sb227)).